A 395-amino-acid polypeptide reads, in one-letter code: Protein SGT1 (395 aa).

Residue Lys-32 forms a Glycyl lysine isopeptide (Lys-Gly) (interchain with G-Cter in ubiquitin) linkage. A disordered region spans residues 137 to 175 (KKNKKQKDSTNKHTIKPVESIENRGDNNSSHSPISPLKI). A phosphoserine mark is found at Ser-168 and Ser-171. The region spanning 182 to 277 (SPKFKIDWYQ…IDSTQWKKLE (96 aa)) is the CS domain. In terms of domain architecture, SGS spans 312–395 (SYPSSSKKKI…PPEGMEPKHW (84 aa)). The disordered stretch occupies residues 373–395 (DWEDVSKGTVKTSPPEGMEPKHW).

The protein belongs to the SGT1 family. In terms of assembly, interacts with SKP1/CBF3D. Part of SCF E3 ubiquitin ligase complexes containing SKP1, CDC53, HRT1 and some F-box proteins. Interacts with CIR1/CDC35.

In terms of biological role, involved in ubiquitination and subsequent proteasomal degradation of target proteins. Required for both entry into S phase and kinetochore function. Also involved in cyclic AMP (cAMP) pathway, possibly by participating in the assembly or the conformational activation of specific multiprotein complexes. This Saccharomyces cerevisiae (strain ATCC 204508 / S288c) (Baker's yeast) protein is Protein SGT1.